The following is a 426-amino-acid chain: Glucose-6-phosphate isomerase (426 aa).

The active-site Proton donor is Glu282. Residues His303 and Lys417 contribute to the active site.

It belongs to the GPI family.

Its subcellular location is the cytoplasm. It catalyses the reaction alpha-D-glucose 6-phosphate = beta-D-fructose 6-phosphate. It participates in carbohydrate biosynthesis; gluconeogenesis. It functions in the pathway carbohydrate degradation; glycolysis; D-glyceraldehyde 3-phosphate and glycerone phosphate from D-glucose: step 2/4. Functionally, catalyzes the reversible isomerization of glucose-6-phosphate to fructose-6-phosphate. The protein is Glucose-6-phosphate isomerase of Aster yellows witches'-broom phytoplasma (strain AYWB).